The following is a 757-amino-acid chain: Probable tRNA (uracil-O(2)-)-methyltransferase (757 aa).

Disordered regions lie at residues 55–93 and 108–138; these read EARG…GPEQ and QQEE…GDFP. A compositionally biased stretch (gly residues) spans 72-84; that stretch reads PGPGQGSPGGGPG. A Phosphoserine modification is found at Ser-78. Positions 123–136 are enriched in basic and acidic residues; sequence DSGHPGHAEGREGD. A Phosphoserine modification is found at Ser-533. The C3H1-type zinc-finger motif lies at 713–743; that stretch reads ACKTRLCWFFMHHPDGCALSTDCCPFAHGPA.

The protein belongs to the TRM44 family.

Its subcellular location is the cytoplasm. The enzyme catalyses uridine(44) in tRNA(Ser) + S-adenosyl-L-methionine = 2'-O-methyluridine(44) in tRNA(Ser) + S-adenosyl-L-homocysteine + H(+). In terms of biological role, probable adenosyl-L-methionine (AdoMet)-dependent tRNA (uracil-O(2)-)-methyltransferase. The chain is Probable tRNA (uracil-O(2)-)-methyltransferase (TRMT44) from Homo sapiens (Human).